Here is a 125-residue protein sequence, read N- to C-terminus: Histone H1-like protein Hc1 (125 aa).

The interval 98 to 125 is disordered; that stretch reads TKAKVKPTKKAAPKTKVKTAKKTRSTKK. Basic residues predominate over residues 100 to 125; the sequence is AKVKPTKKAAPKTKVKTAKKTRSTKK.

Belongs to the histone H1/H5 family. HCT subfamily.

Might have a role analogous to that of eukaryotic histone proteins. In Chlamydia trachomatis serovar D (strain ATCC VR-885 / DSM 19411 / UW-3/Cx), this protein is Histone H1-like protein Hc1 (hctA).